Consider the following 458-residue polypeptide: Oxysterol-binding protein-related protein 3B (458 aa).

Disordered stretches follow at residues 47-66, 370-401, and 431-458; these read VINP…RGRW, DMSK…AFTP, and RAAA…DLST. The segment covering 375 to 396 has biased composition (basic and acidic residues); the sequence is GYEKSSMEERQRAEKRTREEKG. Positions 443-458 are enriched in polar residues; it reads PKSIQFNPWQFQDLST.

This sequence belongs to the OSBP family. Expressed in roots, leaves, stems and flowers.

Functionally, may be involved in the transport of sterols. The chain is Oxysterol-binding protein-related protein 3B (ORP3B) from Arabidopsis thaliana (Mouse-ear cress).